The sequence spans 190 residues: Threonylcarbamoyl-AMP synthase (190 aa).

Positions 7 to 190 (TGSSAAVVDL…ALTGELFRQG (184 aa)) constitute a YrdC-like domain.

Belongs to the SUA5 family. TsaC subfamily.

The protein resides in the cytoplasm. It carries out the reaction L-threonine + hydrogencarbonate + ATP = L-threonylcarbamoyladenylate + diphosphate + H2O. In terms of biological role, required for the formation of a threonylcarbamoyl group on adenosine at position 37 (t(6)A37) in tRNAs that read codons beginning with adenine. Catalyzes the conversion of L-threonine, HCO(3)(-)/CO(2) and ATP to give threonylcarbamoyl-AMP (TC-AMP) as the acyladenylate intermediate, with the release of diphosphate. The polypeptide is Threonylcarbamoyl-AMP synthase (Salmonella typhi).